The primary structure comprises 27 residues: Pregnancy-associated glycoprotein 59 (27 aa).

This sequence belongs to the peptidase A1 family. Post-translationally, glycosylated. As to expression, placenta.

This Capra hircus (Goat) protein is Pregnancy-associated glycoprotein 59 (PAG59).